Consider the following 149-residue polypeptide: Arginine repressor (149 aa).

It belongs to the ArgR family.

Its subcellular location is the cytoplasm. It participates in amino-acid biosynthesis; L-arginine biosynthesis [regulation]. Functionally, regulates arginine biosynthesis genes. In Chlorobaculum tepidum (strain ATCC 49652 / DSM 12025 / NBRC 103806 / TLS) (Chlorobium tepidum), this protein is Arginine repressor.